The primary structure comprises 129 residues: Small ribosomal subunit protein uS11 (129 aa).

This sequence belongs to the universal ribosomal protein uS11 family. As to quaternary structure, part of the 30S ribosomal subunit. Interacts with proteins S7 and S18. Binds to IF-3.

Its function is as follows. Located on the platform of the 30S subunit, it bridges several disparate RNA helices of the 16S rRNA. Forms part of the Shine-Dalgarno cleft in the 70S ribosome. This chain is Small ribosomal subunit protein uS11, found in Hamiltonella defensa subsp. Acyrthosiphon pisum (strain 5AT).